A 407-amino-acid polypeptide reads, in one-letter code: CCA-adding enzyme (407 aa).

Positions 32 and 35 each coordinate ATP. CTP-binding residues include Gly32 and Arg35. 2 residues coordinate Mg(2+): Asp45 and Asp47. ATP contacts are provided by Arg116, Asp159, Arg162, Arg165, and Arg168. Positions 116, 159, 162, 165, and 168 each coordinate CTP.

Belongs to the tRNA nucleotidyltransferase/poly(A) polymerase family. Bacterial CCA-adding enzyme type 3 subfamily. In terms of assembly, homodimer. Mg(2+) serves as cofactor.

The enzyme catalyses a tRNA precursor + 2 CTP + ATP = a tRNA with a 3' CCA end + 3 diphosphate. It catalyses the reaction a tRNA with a 3' CCA end + 2 CTP + ATP = a tRNA with a 3' CCACCA end + 3 diphosphate. Its function is as follows. Catalyzes the addition and repair of the essential 3'-terminal CCA sequence in tRNAs without using a nucleic acid template. Adds these three nucleotides in the order of C, C, and A to the tRNA nucleotide-73, using CTP and ATP as substrates and producing inorganic pyrophosphate. tRNA 3'-terminal CCA addition is required both for tRNA processing and repair. Also involved in tRNA surveillance by mediating tandem CCA addition to generate a CCACCA at the 3' terminus of unstable tRNAs. While stable tRNAs receive only 3'-terminal CCA, unstable tRNAs are marked with CCACCA and rapidly degraded. In Lactiplantibacillus plantarum (strain ATCC BAA-793 / NCIMB 8826 / WCFS1) (Lactobacillus plantarum), this protein is CCA-adding enzyme.